The chain runs to 425 residues: Enolase (425 aa).

Glutamine 162 lines the (2R)-2-phosphoglycerate pocket. The Proton donor role is filled by glutamate 204. Residues aspartate 241, glutamate 284, and aspartate 311 each contribute to the Mg(2+) site. Lysine 336, arginine 365, serine 366, and lysine 387 together coordinate (2R)-2-phosphoglycerate. Residue lysine 336 is the Proton acceptor of the active site.

This sequence belongs to the enolase family. Requires Mg(2+) as cofactor.

The protein resides in the cytoplasm. The protein localises to the secreted. Its subcellular location is the cell surface. It carries out the reaction (2R)-2-phosphoglycerate = phosphoenolpyruvate + H2O. The protein operates within carbohydrate degradation; glycolysis; pyruvate from D-glyceraldehyde 3-phosphate: step 4/5. Functionally, catalyzes the reversible conversion of 2-phosphoglycerate (2-PG) into phosphoenolpyruvate (PEP). It is essential for the degradation of carbohydrates via glycolysis. The chain is Enolase from Brucella anthropi (strain ATCC 49188 / DSM 6882 / CCUG 24695 / JCM 21032 / LMG 3331 / NBRC 15819 / NCTC 12168 / Alc 37) (Ochrobactrum anthropi).